Here is a 326-residue protein sequence, read N- to C-terminus: Tagatose 1,6-diphosphate aldolase 2 (326 aa).

The protein belongs to the aldolase LacD family.

It carries out the reaction D-tagatofuranose 1,6-bisphosphate = D-glyceraldehyde 3-phosphate + dihydroxyacetone phosphate. The protein operates within carbohydrate metabolism; D-tagatose 6-phosphate degradation; D-glyceraldehyde 3-phosphate and glycerone phosphate from D-tagatose 6-phosphate: step 2/2. This chain is Tagatose 1,6-diphosphate aldolase 2 (lacD2), found in Streptococcus agalactiae serotype III (strain NEM316).